We begin with the raw amino-acid sequence, 1516 residues long: Alpha-2-macroglobulin homolog (1516 aa).

The signal sequence occupies residues 1–26 (MSNLRRFSRSLAVAALVLLPFAAVQA).

The protein belongs to the protease inhibitor I39 (alpha-2-macroglobulin) family. Bacterial alpha-2-macroglobulin subfamily.

This chain is Alpha-2-macroglobulin homolog, found in Pseudomonas aeruginosa (strain ATCC 15692 / DSM 22644 / CIP 104116 / JCM 14847 / LMG 12228 / 1C / PRS 101 / PAO1).